Consider the following 96-residue polypeptide: Pro-glucagon (96 aa).

Basic and acidic residues-rich tracts occupy residues 1 to 12 (LQDAEDSSRFDA) and 19 to 30 (EARELSTPKXHS). Positions 1–35 (LQDAEDSSRFDADDTLAGEARELSTPKXHSEGTFS) are disordered.

Belongs to the glucagon family.

The protein resides in the secreted. In terms of biological role, plays a key role in glucose metabolism and homeostasis. Regulates blood glucose by increasing gluconeogenesis and decreasing glycolysis. This Myoxocephalus scorpius (Shorthorn sculpin) protein is Pro-glucagon (gcg).